We begin with the raw amino-acid sequence, 166 residues long: Thioredoxin, mitochondrial (166 aa).

A mitochondrion-targeting transit peptide spans 1-59 (MAQRLLLRRFLTSIISGKPSQSRWAPVASRALQTPQYSPGYLTVTPSQARSIYTTRVCS). Residues 61 to 166 (TFNIQDGPDF…LEAFLKKLIG (106 aa)) enclose the Thioredoxin domain. Residues Cys-90 and Cys-93 each act as nucleophile in the active site. Cysteines 90 and 93 form a disulfide. An N6-acetyllysine; alternate modification is found at Lys-152. Lys-152 carries the post-translational modification N6-succinyllysine; alternate.

It belongs to the thioredoxin family. Monomer.

It localises to the mitochondrion. In terms of biological role, important for the control of mitochondrial reactive oxygen species homeostasis, apoptosis regulation and cell viability. Is involved in various redox reactions including the reduction of protein disulfide bonds, through the reversible oxidation of its active center dithiol to a disulfide. The sequence is that of Thioredoxin, mitochondrial (TXN2) from Bos taurus (Bovine).